Here is a 500-residue protein sequence, read N- to C-terminus: Probable cytosol aminopeptidase (500 aa).

Residues lysine 265 and aspartate 270 each contribute to the Mn(2+) site. Lysine 277 is a catalytic residue. Residues aspartate 288, aspartate 347, and glutamate 349 each coordinate Mn(2+). The active site involves arginine 351.

Belongs to the peptidase M17 family. Mn(2+) is required as a cofactor.

Its subcellular location is the cytoplasm. It catalyses the reaction Release of an N-terminal amino acid, Xaa-|-Yaa-, in which Xaa is preferably Leu, but may be other amino acids including Pro although not Arg or Lys, and Yaa may be Pro. Amino acid amides and methyl esters are also readily hydrolyzed, but rates on arylamides are exceedingly low.. The catalysed reaction is Release of an N-terminal amino acid, preferentially leucine, but not glutamic or aspartic acids.. Functionally, presumably involved in the processing and regular turnover of intracellular proteins. Catalyzes the removal of unsubstituted N-terminal amino acids from various peptides. The sequence is that of Probable cytosol aminopeptidase from Corynebacterium glutamicum (strain ATCC 13032 / DSM 20300 / JCM 1318 / BCRC 11384 / CCUG 27702 / LMG 3730 / NBRC 12168 / NCIMB 10025 / NRRL B-2784 / 534).